Reading from the N-terminus, the 109-residue chain is Protein AC78 (109 aa).

Residues 61 to 81 (GIIILISVVAFIALFLLLYVI) traverse the membrane as a helical segment.

It localises to the host membrane. It is found in the virion. Its function is as follows. Plays an essential role in budded virus production and occlusion body formation. The chain is Protein AC78 (AC78) from Autographa californica nuclear polyhedrosis virus (AcMNPV).